The chain runs to 74 residues: U3-agatoxin-Ao1d (74 aa).

The signal sequence occupies residues 1-20 (MKAAISLLLLSALLFVVIEA). Positions 21–34 (ITYEEGKELFQGER) are excised as a propeptide. Disulfide bonds link cysteine 37–cysteine 53, cysteine 44–cysteine 58, cysteine 52–cysteine 68, and cysteine 60–cysteine 66. The residue at position 72 (serine 72) is a Serine amide.

This sequence belongs to the neurotoxin 07 (Beta/delta-agtx) family. 02 (aga-3) subfamily. Expressed by the venom gland.

It is found in the secreted. In terms of biological role, insecticidal neurotoxin that induces an irreversible spastic paralysis when injected into insects. Modifies presynaptic voltage-gated sodium channels (Nav), causing them to open at the normal resting potential of the nerve. This leads to spontaneous release of neurotransmitter and repetitive action potentials in motor neurons. This Agelena orientalis (Funnel-web spider) protein is U3-agatoxin-Ao1d.